A 36-amino-acid polypeptide reads, in one-letter code: GPAQPTYPGDDAPVEDLVRFYDNLQQYLNVVTRHRY.

Tyrosine 36 bears the Tyrosine amide mark.

This sequence belongs to the NPY family.

The protein resides in the secreted. Its function is as follows. Hormone secreted by pancreatic cells that acts as a regulator of pancreatic and gastrointestinal functions. In Struthio camelus (Common ostrich), this protein is Pancreatic polypeptide (PPY).